The sequence spans 109 residues: Glutaredoxin-C13 (109 aa).

One can recognise a Glutaredoxin domain in the interval 2–108; the sequence is AEMVARLASE…PMLKNAGALW (107 aa). Residues Cys22 and Cys25 are joined by a disulfide bond. The Responsive for interaction with TGA factors motif lies at 106–109; that stretch reads ALWL.

It belongs to the glutaredoxin family. CC-type subfamily.

It localises to the cytoplasm. Its subcellular location is the nucleus. Has a glutathione-disulfide oxidoreductase activity in the presence of NADPH and glutathione reductase. Reduces low molecular weight disulfides and proteins. This Oryza sativa subsp. japonica (Rice) protein is Glutaredoxin-C13 (GRXC13).